Reading from the N-terminus, the 111-residue chain is UPF0342 protein gbs1446 (111 aa).

The protein belongs to the UPF0342 family.

The sequence is that of UPF0342 protein gbs1446 from Streptococcus agalactiae serotype III (strain NEM316).